A 361-amino-acid polypeptide reads, in one-letter code: Chorismate synthase (361 aa).

NADP(+) contacts are provided by R48 and R54. FMN is bound by residues 125-127 (RSS), 238-239 (NA), G278, 293-297 (KPTSS), and R319.

The protein belongs to the chorismate synthase family. In terms of assembly, homotetramer. FMNH2 is required as a cofactor.

It catalyses the reaction 5-O-(1-carboxyvinyl)-3-phosphoshikimate = chorismate + phosphate. The protein operates within metabolic intermediate biosynthesis; chorismate biosynthesis; chorismate from D-erythrose 4-phosphate and phosphoenolpyruvate: step 7/7. Its function is as follows. Catalyzes the anti-1,4-elimination of the C-3 phosphate and the C-6 proR hydrogen from 5-enolpyruvylshikimate-3-phosphate (EPSP) to yield chorismate, which is the branch point compound that serves as the starting substrate for the three terminal pathways of aromatic amino acid biosynthesis. This reaction introduces a second double bond into the aromatic ring system. This chain is Chorismate synthase, found in Cronobacter sakazakii (strain ATCC BAA-894) (Enterobacter sakazakii).